A 698-amino-acid polypeptide reads, in one-letter code: Polyphosphate kinase (698 aa).

Position 63 (N63) interacts with ATP. Positions 390 and 420 each coordinate Mg(2+). The active-site Phosphohistidine intermediate is the H450. ATP is bound by residues Y483, R579, and H607.

Belongs to the polyphosphate kinase 1 (PPK1) family. Mg(2+) serves as cofactor. Post-translationally, an intermediate of this reaction is the autophosphorylated ppk in which a phosphate is covalently linked to a histidine residue through a N-P bond.

The enzyme catalyses [phosphate](n) + ATP = [phosphate](n+1) + ADP. In terms of biological role, catalyzes the reversible transfer of the terminal phosphate of ATP to form a long-chain polyphosphate (polyP). The chain is Polyphosphate kinase from Xylella fastidiosa (strain Temecula1 / ATCC 700964).